The primary structure comprises 712 residues: Exocyst complex component EXO70I (712 aa).

The first 18 residues, 1–18 (MHKKQLMALLMVPQTSDS), serve as a signal peptide directing secretion. A coiled-coil region spans residues 26–53 (LESAYSDLESLLRSSKQMEQNIETMETR). The N-linked (GlcNAc...) asparagine glycan is linked to asparagine 111.

The protein belongs to the EXO70 family. Subunit of the exocyst complex that mediates vesicle tethering during exocytosis. Interacts with VPY at the periarbuscular membrane (PAM) around the arbuscule hyphal tips. In terms of tissue distribution, present at low levels in non-mycorrhizal root tips.

The protein localises to the cell membrane. In terms of biological role, component of an exocyst subcomplex specifically required for periarbuscular membrane (PAM) biogenesis during arbuscular mycorrhizal (AM) symbiosis with AM fungi (e.g. Glomus versiforme), especially critical during the early branching phase of arbuscule development; probably involved in STR and STR2 delivery into the PAM. The chain is Exocyst complex component EXO70I from Medicago truncatula (Barrel medic).